Consider the following 528-residue polypeptide: Phosphoenolpyruvate carboxykinase (ATP) (528 aa).

Positions 56, 192, and 198 each coordinate substrate. Residues Lys198, His217, and 233–241 (GLSGTGKTT) contribute to the ATP site. Mn(2+) is bound by residues Lys198 and His217. Asp254 is a Mn(2+) binding site. Positions 282, 319, and 444 each coordinate ATP. Residue Arg319 coordinates substrate.

Belongs to the phosphoenolpyruvate carboxykinase (ATP) family. The cofactor is Mn(2+).

The protein localises to the cytoplasm. The catalysed reaction is oxaloacetate + ATP = phosphoenolpyruvate + ADP + CO2. The protein operates within carbohydrate biosynthesis; gluconeogenesis. In terms of biological role, involved in the gluconeogenesis. Catalyzes the conversion of oxaloacetate (OAA) to phosphoenolpyruvate (PEP) through direct phosphoryl transfer between the nucleoside triphosphate and OAA. The chain is Phosphoenolpyruvate carboxykinase (ATP) from Bacillus cereus (strain AH187).